We begin with the raw amino-acid sequence, 55 residues long: Large ribosomal subunit protein bL33 (55 aa).

The protein belongs to the bacterial ribosomal protein bL33 family.

This chain is Large ribosomal subunit protein bL33, found in Deinococcus geothermalis (strain DSM 11300 / CIP 105573 / AG-3a).